The chain runs to 306 residues: Pantothenate kinase (306 aa).

Position 91–98 (91–98 (GSVAVGKS)) interacts with ATP.

Belongs to the prokaryotic pantothenate kinase family.

The protein resides in the cytoplasm. The enzyme catalyses (R)-pantothenate + ATP = (R)-4'-phosphopantothenate + ADP + H(+). The protein operates within cofactor biosynthesis; coenzyme A biosynthesis; CoA from (R)-pantothenate: step 1/5. This is Pantothenate kinase from Streptococcus pneumoniae (strain 70585).